The chain runs to 326 residues: Probable oxidoreductase patJ (326 aa).

Residues 287-326 (HGVQPGSVNGSNGHSTGVESKLEQLGSRAQRRVVIDDAGK) form a disordered region. Residues 292-304 (GSVNGSNGHSTGV) are compositionally biased toward polar residues.

The protein belongs to the oxidoreductase OpS7 family.

The protein resides in the vacuole lumen. It localises to the cytoplasmic vesicle lumen. The protein operates within mycotoxin biosynthesis; patulin biosynthesis. Functionally, probable oxidoreductase; part of the gene cluster that mediates the biosynthesis of patulin, an acetate-derived tetraketide mycotoxin produced by several fungal species that shows antimicrobial properties against several bacteria. PatJ acts with patO in the vacuole to convert gentisyl alcohol to isoepoxydon. The pathway begins with the synthesis of 6-methylsalicylic acid by the polyketide synthase (PKS) patK via condensation of acetate and malonate units. The 6-methylsalicylic acid decarboxylase patG then catalyzes the decarboxylation of 6-methylsalicylic acid to yield m-cresol (also known as 3-methylphenol). These first reactions occur in the cytosol. The intermediate m-cresol is then transported into the endoplasmic reticulum where the cytochrome P450 monooxygenase patH converts it to m-hydroxybenzyl alcohol, which is further converted to gentisyl alcohol by the cytochrome P450 monooxygenase patI. The oxidoreductases patJ and patO further convert gentisyl alcohol to isoepoxydon in the vacuole. PatN catalyzes then the transformation of isoepoxydon into phyllostine. The cluster protein patF is responsible for the conversion from phyllostine to neopatulin whereas the alcohol dehydrogenase patD converts neopatulin to E-ascladiol. The steps between isoepoxydon and E-ascladiol occur in the cytosol, and E-ascladiol is probably secreted to the extracellular space by one of the cluster-specific transporters patC or patM. Finally, the secreted patulin synthase patE catalyzes the conversion of E-ascladiol to patulin. This Penicillium expansum (Blue mold rot fungus) protein is Probable oxidoreductase patJ.